Here is a 205-residue protein sequence, read N- to C-terminus: Ribosome maturation factor RimP (205 aa).

The protein belongs to the RimP family.

It localises to the cytoplasm. Functionally, required for maturation of 30S ribosomal subunits. In Sinorhizobium medicae (strain WSM419) (Ensifer medicae), this protein is Ribosome maturation factor RimP.